The primary structure comprises 407 residues: 5-aminolevulinate synthase 2 (407 aa).

Substrate contacts are provided by arginine 21 and serine 137. Residues serine 189, histidine 217, and threonine 245 each contribute to the pyridoxal 5'-phosphate site. Lysine 248 is an active-site residue. An N6-(pyridoxal phosphate)lysine modification is found at lysine 248. Pyridoxal 5'-phosphate contacts are provided by threonine 277 and threonine 278. Threonine 363 serves as a coordination point for substrate.

This sequence belongs to the class-II pyridoxal-phosphate-dependent aminotransferase family. In terms of assembly, homodimer. The cofactor is pyridoxal 5'-phosphate.

It carries out the reaction succinyl-CoA + glycine + H(+) = 5-aminolevulinate + CO2 + CoA. The protein operates within porphyrin-containing compound metabolism; protoporphyrin-IX biosynthesis; 5-aminolevulinate from glycine: step 1/1. This Cereibacter sphaeroides (strain ATCC 17023 / DSM 158 / JCM 6121 / CCUG 31486 / LMG 2827 / NBRC 12203 / NCIMB 8253 / ATH 2.4.1.) (Rhodobacter sphaeroides) protein is 5-aminolevulinate synthase 2 (hemT).